The chain runs to 504 residues: Glucan endo-1,3-beta-glucosidase 7 (504 aa).

Positions 1-22 (MALSISIYFLLIFLSHFPSSHA) are cleaved as a signal peptide. Glutamate 119 serves as the catalytic Proton donor. Glutamate 264 (nucleophile) is an active-site residue. A disulfide bridge links cysteine 365 with cysteine 427.

It belongs to the glycosyl hydrolase 17 family. Post-translationally, contains two additional disulfide bonds.

The protein resides in the secreted. The protein localises to the cell wall. The enzyme catalyses Hydrolysis of (1-&gt;3)-beta-D-glucosidic linkages in (1-&gt;3)-beta-D-glucans.. The sequence is that of Glucan endo-1,3-beta-glucosidase 7 from Arabidopsis thaliana (Mouse-ear cress).